Consider the following 325-residue polypeptide: DNA-directed RNA polymerase subunit alpha (325 aa).

An alpha N-terminal domain (alpha-NTD) region spans residues 1–239; sequence MQQFLRYNIN…DHLKPLIDIN (239 aa). The interval 255-325 is alpha C-terminal domain (alpha-CTD); it reads EKNKKLSIPI…ELYDLKLKNN (71 aa).

Belongs to the RNA polymerase alpha chain family. In terms of assembly, homodimer. The RNAP catalytic core consists of 2 alpha, 1 beta, 1 beta' and 1 omega subunit. When a sigma factor is associated with the core the holoenzyme is formed, which can initiate transcription.

The catalysed reaction is RNA(n) + a ribonucleoside 5'-triphosphate = RNA(n+1) + diphosphate. DNA-dependent RNA polymerase catalyzes the transcription of DNA into RNA using the four ribonucleoside triphosphates as substrates. This chain is DNA-directed RNA polymerase subunit alpha, found in Mycoplasmoides gallisepticum (strain R(low / passage 15 / clone 2)) (Mycoplasma gallisepticum).